We begin with the raw amino-acid sequence, 166 residues long: Small ribosomal subunit protein uS5 (166 aa).

One can recognise an S5 DRBM domain in the interval 11–74 (LQEKLIAVNR…EKARRNMMNV (64 aa)).

It belongs to the universal ribosomal protein uS5 family. Part of the 30S ribosomal subunit. Contacts proteins S4 and S8.

Its function is as follows. With S4 and S12 plays an important role in translational accuracy. Functionally, located at the back of the 30S subunit body where it stabilizes the conformation of the head with respect to the body. This Sodalis glossinidius (strain morsitans) protein is Small ribosomal subunit protein uS5.